Here is a 441-residue protein sequence, read N- to C-terminus: Ankyrin repeat and MYND domain-containing protein 2 (441 aa).

3 ANK repeats span residues 45-74 (NGMT…DVNC), 79-108 (HGYT…ETDV), and 159-188 (KLAG…NPLL). Positions 320, 323, 332, 335, 341, 345, 353, and 357 each coordinate Zn(2+). The MYND-type zinc finger occupies 320 to 357 (CTTCGEKGASKRCSVCKMVIYCDQTCQKTHWFTHKKIC). The span at 374–384 (EKRQEENHGKL) shows a compositional bias: basic and acidic residues. A disordered region spans residues 374 to 441 (EKRQEENHGK…APAGPQVSEE (68 aa)).

Interacts with the retinal-specific guanylyl cyclase GC1.

It localises to the cell projection. The protein resides in the cilium. Functionally, may be involved in the trafficking of signaling proteins to the cilia. The chain is Ankyrin repeat and MYND domain-containing protein 2 (ANKMY2) from Homo sapiens (Human).